The following is a 181-amino-acid chain: Nucleoside triphosphate/diphosphate phosphatase (181 aa).

Catalysis depends on Arg-26, which acts as the Proton donor. Mg(2+)-binding residues include Asn-90, Asp-106, Asp-108, Asp-110, Asp-123, and Glu-126.

The protein belongs to the Ntdp family. Requires Mg(2+) as cofactor.

The catalysed reaction is a ribonucleoside 5'-triphosphate + H2O = a ribonucleoside 5'-diphosphate + phosphate + H(+). It carries out the reaction a ribonucleoside 5'-diphosphate + H2O = a ribonucleoside 5'-phosphate + phosphate + H(+). Has nucleoside phosphatase activity towards nucleoside triphosphates and nucleoside diphosphates. The chain is Nucleoside triphosphate/diphosphate phosphatase from Ligilactobacillus salivarius (strain UCC118) (Lactobacillus salivarius).